A 322-amino-acid chain; its full sequence is NADH-cytochrome b5 reductase 2 (322 aa).

The chain crosses the membrane as a helical span at residues 30–46 (LAPVYVAVGLAGLGVGL). The region spanning 71–176 (QGWVNLKLSD…KGPLPKYPWE (106 aa)) is the FAD-binding FR-type domain. Position 179–214 (179–214 (KHKHICLVAGGTGITPMYQLAREIFKNPEDKTKVTL)) interacts with FAD.

Belongs to the flavoprotein pyridine nucleotide cytochrome reductase family. FAD is required as a cofactor.

It localises to the mitochondrion outer membrane. It catalyses the reaction 2 Fe(III)-[cytochrome b5] + NADH = 2 Fe(II)-[cytochrome b5] + NAD(+) + H(+). Its function is as follows. May mediate the reduction of outer membrane cytochrome b5. The polypeptide is NADH-cytochrome b5 reductase 2 (mcr1) (Emericella nidulans (strain FGSC A4 / ATCC 38163 / CBS 112.46 / NRRL 194 / M139) (Aspergillus nidulans)).